Reading from the N-terminus, the 369-residue chain is Isopentenyl-diphosphate delta-isomerase (369 aa).

9–10 lines the substrate pocket; the sequence is RK. FMN is bound by residues Thr-65, 66-68, Ser-96, and Asn-125; that span reads GMT. Substrate is bound at residue 96–98; that stretch reads SQR. Gln-160 provides a ligand contact to substrate. Residue Glu-161 coordinates Mg(2+). FMN is bound by residues Lys-193, Ser-218, Thr-223, 275–277, and 296–297; these read GVR and AL.

This sequence belongs to the IPP isomerase type 2 family. In terms of assembly, homooctamer. Dimer of tetramers. Requires FMN as cofactor. NADPH is required as a cofactor. Mg(2+) serves as cofactor.

It is found in the cytoplasm. It carries out the reaction isopentenyl diphosphate = dimethylallyl diphosphate. Involved in the biosynthesis of isoprenoids. Catalyzes the 1,3-allylic rearrangement of the homoallylic substrate isopentenyl (IPP) to its allylic isomer, dimethylallyl diphosphate (DMAPP). The protein is Isopentenyl-diphosphate delta-isomerase of Sulfurisphaera tokodaii (strain DSM 16993 / JCM 10545 / NBRC 100140 / 7) (Sulfolobus tokodaii).